Consider the following 312-residue polypeptide: Ribose-phosphate pyrophosphokinase (312 aa).

Residues 34–36 and 93–94 contribute to the ATP site; these read DGE and RQ. Mg(2+)-binding residues include histidine 128 and aspartate 167. Lysine 191 is an active-site residue. Residues arginine 193 and aspartate 217 each coordinate D-ribose 5-phosphate.

The protein belongs to the ribose-phosphate pyrophosphokinase family. Class I subfamily. In terms of assembly, homohexamer. Mg(2+) serves as cofactor.

Its subcellular location is the cytoplasm. It catalyses the reaction D-ribose 5-phosphate + ATP = 5-phospho-alpha-D-ribose 1-diphosphate + AMP + H(+). It participates in metabolic intermediate biosynthesis; 5-phospho-alpha-D-ribose 1-diphosphate biosynthesis; 5-phospho-alpha-D-ribose 1-diphosphate from D-ribose 5-phosphate (route I): step 1/1. Involved in the biosynthesis of the central metabolite phospho-alpha-D-ribosyl-1-pyrophosphate (PRPP) via the transfer of pyrophosphoryl group from ATP to 1-hydroxyl of ribose-5-phosphate (Rib-5-P). This Baumannia cicadellinicola subsp. Homalodisca coagulata protein is Ribose-phosphate pyrophosphokinase.